The chain runs to 244 residues: Membrane-spanning 4-domains subfamily A member 6B (244 aa).

The Cytoplasmic segment spans residues 1 to 46 (MIPQVVTSETVAMISPNGMSLPQTDKPQPFHQWQDSLKKHLKAEIK). A helical membrane pass occupies residues 47-67 (VMAAIQIMCAVMVLSLGIILA). Topologically, residues 68–84 (SVPSNLHFTSVFSVLLK) are extracellular. The chain crosses the membrane as a helical span at residues 85 to 105 (SGYPFIGALFFIVSGILSIVT). The Cytoplasmic segment spans residues 106-121 (ETKSTKILVDSSLTLN). The helical transmembrane segment at 122 to 142 (ILSVSFAFMGIIIISVSLAGL) threads the bilayer. Topologically, residues 143-176 (HPASEQCLQSKELRPTEYHYYQFLDRNECFAAKS) are extracellular. A helical membrane pass occupies residues 177–197 (VLAGVFSLMLISTMLELGLAV). Residues 198 to 244 (LTAMLWWKQSHSNIPGNVMFLPHSSNNDSNMESKVLCNPSYEEQLVC) lie on the Cytoplasmic side of the membrane.

The protein belongs to the MS4A family. Expressed at high levels in thymus, spleen, and peripheral lymph nodes, with less abundant levels in non-lymphoid tissues.

The protein resides in the membrane. May be involved in signal transduction as a component of a multimeric receptor complex. This is Membrane-spanning 4-domains subfamily A member 6B (Ms4a6b) from Mus musculus (Mouse).